We begin with the raw amino-acid sequence, 1009 residues long: Protein naked cuticle (1009 aa).

Composition is skewed to polar residues over residues 68–83 (IITT…ASNK) and 121–130 (LPQDMSSSGS). The tract at residues 68 to 166 (IITTPPGNAS…QQQTAAAATG (99 aa)) is disordered. Over residues 152–166 (QQQQQQQQTAAAATG) the composition is skewed to low complexity. The interaction with dsh stretch occupies residues 206–282 (EFTCDVSVEG…TVSPEGKSKS (77 aa)). The EF-hand domain maps to 217–253 (KSSQPLQFSFTFYDLDGHHGKITKDDIVGIVYTIYES). Disordered stretches follow at residues 328–433 (MSKQ…QQQL), 456–479 (AGNE…RQQD), and 515–580 (GNDS…QQQR). Residues 349–359 (RRQHRYRPRKL) show a composition bias toward basic residues. The span at 370-387 (NSEKEKERERERERESHA) shows a compositional bias: basic and acidic residues. The span at 403–414 (KSHHHHHHHGRY) shows a compositional bias: basic residues. The span at 515–525 (GNDSGNWQNRH) shows a compositional bias: polar residues. 2 stretches are compositionally biased toward low complexity: residues 526-535 (LQQSLQQQPQ) and 570-580 (HQQLQQQQQQR). Positions 584 to 613 (ECWKSALNRNDLISIIRESMEKNRLCFQLN) are required for nuclear localization and inhibition of Wnt signaling. Disordered stretches follow at residues 619 to 662 (NVSP…SPLS), 773 to 799 (SAAH…HNQK), 835 to 899 (LQQK…SAGS), and 955 to 982 (TESG…LDTS). Low complexity-rich tracts occupy residues 624–638 (RQPA…QRQR) and 653–662 (SPAAPQSPLS). The segment covering 843–857 (RRHRHKQQQQQHHHQ) has biased composition (basic residues). A compositionally biased stretch (low complexity) spans 858–875 (QQQQQQQQQNQQQQQQQQ). The span at 968–979 (EADEGQEQEVEL) shows a compositional bias: acidic residues.

Belongs to the NKD family. Interacts with dsh.

It is found in the cell membrane. The protein resides in the cytoplasm. It localises to the nucleus. Cell autonomous antagonist of the canonical Wnt signaling pathway. May activate a second Wnt signaling pathway that controls planar cell polarity. Required for neuroblast specification. This is Protein naked cuticle from Drosophila pseudoobscura pseudoobscura (Fruit fly).